The following is a 369-amino-acid chain: Mycofactocin maturase MftC (369 aa).

Residues Leu16 to Ser232 form the Radical SAM core domain. [4Fe-4S] cluster-binding residues include Cys30, Cys34, Cys37, Cys251, Cys258, Cys269, Cys310, Cys313, Cys319, Cys323, and Cys341. Residues Ala347–Glu369 are disordered. Residues Gln352 to Glu369 are compositionally biased toward basic and acidic residues.

It belongs to the radical SAM superfamily. MftC family. In terms of assembly, interacts with MftB. It depends on [4Fe-4S] cluster as a cofactor.

The catalysed reaction is [mycofactocin precursor peptide]-C-terminal glycyl-L-valyl-L-tyrosine + S-adenosyl-L-methionine = [mycofactocin precursor peptide]-C-terminal glycyl-N-{[2-(4-hydroxyphenyl)ethenyl]-3-methylbutanamide} + 5'-deoxyadenosine + L-methionine + CO2. It catalyses the reaction [mycofactocin precursor peptide]-C-terminal glycyl-N-{[2-(4-hydroxyphenyl)ethenyl]-3-methylbutanamide} + AH2 + S-adenosyl-L-methionine = [mycofactocin precursor peptide]-C-terminal glycyl-N-{5-[(4-hydroxyphenyl)methyl]-4,4-dimethyl-2-oxopyrrolidin-3-yl}acetamide + 5'-deoxyadenosine + L-methionine + A + H(+). Radical S-adenosylmethionine (SAM) enzyme responsible for the first step of the biosynthesis of the enzyme cofactor mycofactocin (MFT). Catalyzes two reactions at the C-terminus of the mycofactocin precursor (the MftA peptide). The first one is the oxidative decarboxylation of the C-terminal L-tyrosine of MftA, forming an unsaturated tyramine moiety. The second reaction is the cross-linking of the tyramine with the penultimate L-valine residue, forming a five-membered lactam ring. Its activity requires the presence of the MftB chaperone. The chain is Mycofactocin maturase MftC from Mycobacterium ulcerans (strain Agy99).